The sequence spans 177 residues: VQ motif-containing protein 11 (177 aa).

A VQ motif is present at residues 25 to 34 (FRNIVQKLTG). A phosphoserine mark is found at S43, S99, S115, S142, and S145. Residues 115–133 (SAREEHHAQPDKEEQKAIA) show a composition bias toward basic and acidic residues. The disordered stretch occupies residues 115–177 (SAREEHHAQP…RIHEDNHRDS (63 aa)). The segment covering 148 to 159 (EPAPELLPLFPL) has biased composition (low complexity). S161 bears the Phosphoserine mark. Residues 168–177 (RIHEDNHRDS) are compositionally biased toward basic and acidic residues.

Phosphorylated on serine residues by MPK6.

It is found in the nucleus. May modulate WRKY transcription factor activities. In Arabidopsis thaliana (Mouse-ear cress), this protein is VQ motif-containing protein 11.